The primary structure comprises 778 residues: Ubiquitin thioesterase trabid (778 aa).

2 consecutive RanBP2-type zinc fingers follow at residues 5 to 36 (KDDA…SKPL) and 89 to 118 (DSEK…KRGG). Positions 187–197 (ASHNQSQSQHR) are enriched in polar residues. The tract at residues 187-226 (ASHNQSQSQHRQPVLQQQMQLQLQPQQQRESSSSAAVPPQ) is disordered. The span at 198-226 (QPVLQQQMQLQLQPQQQRESSSSAAVPPQ) shows a compositional bias: low complexity. The segment at 232-261 (YVSKWACNSCTYENWPRSIKCSMCGKTRER) adopts a RanBP2-type 3 zinc-finger fold. Residues 265-290 (GSQNDLHASSSLNSQEENQQQLQQPN) are disordered. Residues 273–288 (SSSLNSQEENQQQLQQ) show a composition bias toward low complexity. Positions 507 to 665 (MFVLWNRSAG…RGHFSALVPM (159 aa)) constitute an OTU domain. Cysteine 518 serves as the catalytic Nucleophile. Histidine 658 (proton acceptor) is an active-site residue. Serine 770, serine 771, and serine 775 each carry phosphoserine.

The protein belongs to the peptidase C64 family. As to quaternary structure, interacts with Apc.

The enzyme catalyses Thiol-dependent hydrolysis of ester, thioester, amide, peptide and isopeptide bonds formed by the C-terminal Gly of ubiquitin (a 76-residue protein attached to proteins as an intracellular targeting signal).. Its function is as follows. Positive regulator of the Wnt signaling pathway. Specifically cleaves 'Lys-63'-linked ubiquitin chains. May act by deubiquitinating APC protein, a negative regulator of Wnt-mediated transcription. Required for an efficient wg response, but not for other signaling responses, in the eye. The sequence is that of Ubiquitin thioesterase trabid (trbd) from Drosophila melanogaster (Fruit fly).